The primary structure comprises 36 residues: Cecropin-D (36 aa).

The residue at position 36 (Lys-36) is a Lysine amide.

Belongs to the cecropin family.

It is found in the secreted. Cecropins have lytic and antibacterial activity against several Gram-positive and Gram-negative bacteria. The sequence is that of Cecropin-D from Antheraea pernyi (Chinese oak silk moth).